A 2108-amino-acid polypeptide reads, in one-letter code: Kinesin-like protein KIF26B (2108 aa).

2 disordered regions span residues 1–124 and 263–287; these read MNSV…PGSD and KHGSKPSSLGVSNGAEKKSGSPTHQ. The span at 40–50 shows a compositional bias: basic and acidic residues; it reads WYRKAYEESRA. The segment covering 58-98 has biased composition (low complexity); it reads GAGSALGSSGTPSPGSGTSSPSSFTGSPGPASPGIGTSSPG. The span at 99–120 shows a compositional bias: gly residues; sequence SLGGSPGFGTGSPGSGSGGGSS. The region spanning 450 to 801 is the Kinesin motor domain; that stretch reads KVKVMLRICS…IQIASRVLRM (352 aa). Residue 546 to 553 coordinates ATP; that stretch reads GHAKLGKS. Disordered regions lie at residues 805 to 825, 876 to 917, 937 to 1166, 1406 to 1504, 1519 to 1653, 1685 to 1799, and 1824 to 1974; these read KTKYTSSSSGGESSCEEGRMR, SDKE…GKSE, DGSE…ESKK, EPEA…PVTD, GLAT…SSSK, AESL…ASKL, and RAGP…WVDG. Positions 1004-1046 are enriched in low complexity; the sequence is SHSPVPAAAPAHSPSPASPRSVPGSSSQHSASPLVQSPSLQSS. Positions 1424 to 1461 are enriched in basic and acidic residues; that stretch reads RESKENSAKKEMKFEDPWLKREEEVKKETAHPNEEGMM. Positions 1491–1500 are enriched in low complexity; it reads SSSSGEVSAS. 2 stretches are compositionally biased toward polar residues: residues 1521-1537 and 1611-1628; these read ATQSPVHPNKSVKSSSL and RASPQHSASGSGTSSPLN. Composition is skewed to low complexity over residues 1713–1730 and 1751–1763; these read SAGTSPPSSGASPKAGQS and STTKTLSFSTKSL. A compositionally biased stretch (polar residues) spans 1781–1795; that stretch reads PWSTQSLSRNRSSGL. Residues 1824–1836 are compositionally biased toward low complexity; that stretch reads RAGPEAEARGGAL. Thr-1855 is modified (phosphothreonine). Polar residues-rich tracts occupy residues 1866–1875 and 1907–1925; these read GHGSDNSSVL and ATGSASSAQDSTSENSSSV. The segment covering 1930-1948 has biased composition (basic residues); that stretch reads RSLKTPKKRSNPGSQRRRL. The span at 1954-1968 shows a compositional bias: polar residues; that stretch reads LDTSSPVRKPPNSTG. Ser-1958 bears the Phosphoserine mark.

The protein belongs to the TRAFAC class myosin-kinesin ATPase superfamily. Kinesin family. KIF26 subfamily. In terms of assembly, interacts with MYH10. Post-translationally, phosphorylation at Thr-1855 and Ser-1958 by CDKs, mainly CDK2 and CDK5, enhances the interaction with NEDD4, polyubiquitination, and subsequent proteasomal degradation. Phosphorylation occurs upon loss of interaction with microtubules. In terms of processing, polyubiquitinated by NEDD4, resulting in proteasomal degradation.

It is found in the cytoplasm. It localises to the cytoskeleton. Its function is as follows. Essential for embryonic kidney development. Plays an important role in the compact adhesion between mesenchymal cells adjacent to the ureteric buds, possibly by interacting with MYH10. This could lead to the establishment of the basolateral integrity of the mesenchyme and the polarized expression of ITGA8, which maintains the GDNF expression required for further ureteric bud attraction. Although it seems to lack ATPase activity it is constitutively associated with microtubules. The polypeptide is Kinesin-like protein KIF26B (KIF26B) (Homo sapiens (Human)).